Here is a 305-residue protein sequence, read N- to C-terminus: UDP-3-O-acyl-N-acetylglucosamine deacetylase (305 aa).

Zn(2+)-binding residues include His79, His238, and Asp242. Residue His265 is the Proton donor of the active site.

It belongs to the LpxC family. Zn(2+) serves as cofactor.

The enzyme catalyses a UDP-3-O-[(3R)-3-hydroxyacyl]-N-acetyl-alpha-D-glucosamine + H2O = a UDP-3-O-[(3R)-3-hydroxyacyl]-alpha-D-glucosamine + acetate. The protein operates within glycolipid biosynthesis; lipid IV(A) biosynthesis; lipid IV(A) from (3R)-3-hydroxytetradecanoyl-[acyl-carrier-protein] and UDP-N-acetyl-alpha-D-glucosamine: step 2/6. Catalyzes the hydrolysis of UDP-3-O-myristoyl-N-acetylglucosamine to form UDP-3-O-myristoylglucosamine and acetate, the committed step in lipid A biosynthesis. The protein is UDP-3-O-acyl-N-acetylglucosamine deacetylase of Vibrio campbellii (strain ATCC BAA-1116).